Here is a 241-residue protein sequence, read N- to C-terminus: Phosphoadenosine 5'-phosphosulfate reductase (241 aa).

Cys235 functions as the Nucleophile; cysteine thiosulfonate intermediate in the catalytic mechanism.

It belongs to the PAPS reductase family. CysH subfamily.

It is found in the cytoplasm. The catalysed reaction is [thioredoxin]-disulfide + sulfite + adenosine 3',5'-bisphosphate + 2 H(+) = [thioredoxin]-dithiol + 3'-phosphoadenylyl sulfate. The protein operates within sulfur metabolism; hydrogen sulfide biosynthesis; sulfite from sulfate: step 3/3. Its function is as follows. Catalyzes the formation of sulfite from phosphoadenosine 5'-phosphosulfate (PAPS) using thioredoxin as an electron donor. The polypeptide is Phosphoadenosine 5'-phosphosulfate reductase (Xanthomonas campestris pv. campestris (strain 8004)).